The chain runs to 159 residues: Aphid transmission protein (159 aa).

It belongs to the caulimoviridae ORF II family.

In terms of biological role, this protein is involved in virus transmission. The sequence is that of Aphid transmission protein from Arabidopsis thaliana (Mouse-ear cress).